The following is a 491-amino-acid chain: MNTQQLAKLRSIVPEMRRVRHIHFVGIGGAGMGGIAEVLANEGYQISGSDLAPNPVTQQLMNLGATIYFNHRPENVRDASVVVVSSAISADNPEIVAAHEARIPVIRRAEMLAELMRFRHGIAIAGTHGKTTTTAMVSSIYAEAGLDPTFVNGGLVKAAGVHARLGHGRYLIAEADESDASFLHLQPMVAIVTNIEADHMDTYQGDFENLKQTFINFLHNLPFYGRAVMCVDDPVIRELLPRVGRQTTTYGFSEDADVRVEDYQQIGPQGHFTLLRQDKEPMRVTLNAPGRHNALNAAAAVAVATEEGIDDEAILRALESFQGTGRRFDFLGEFPLEPVNGKSGTAMLVDDYGHHPTEVDATIKAARAGWPDKNLVMLFQPHRFTRTRDLYDDFANVLTQVDTLLMLEVYPAGEAPIPGADSRSLCRTIRGRGKIDPILVPDPAQVAEMLAPVLIGNDLILVQGAGNIGKIARSLAEIKLKPQTPEEEQHD.

126–132 (GTHGKTT) contributes to the ATP binding site.

Belongs to the MurCDEF family.

Its subcellular location is the cytoplasm. The enzyme catalyses UDP-N-acetyl-alpha-D-muramate + L-alanine + ATP = UDP-N-acetyl-alpha-D-muramoyl-L-alanine + ADP + phosphate + H(+). It participates in cell wall biogenesis; peptidoglycan biosynthesis. Its function is as follows. Cell wall formation. This is UDP-N-acetylmuramate--L-alanine ligase from Shigella sonnei (strain Ss046).